A 216-amino-acid chain; its full sequence is Imidazole glycerol phosphate synthase subunit HisH (216 aa).

One can recognise a Glutamine amidotransferase type-1 domain in the interval 2 to 216; sequence RVAIIDYGSG…LIANFLKWKP (215 aa). The Nucleophile role is filled by C88. Catalysis depends on residues H196 and E198.

Heterodimer of HisH and HisF.

Its subcellular location is the cytoplasm. The catalysed reaction is 5-[(5-phospho-1-deoxy-D-ribulos-1-ylimino)methylamino]-1-(5-phospho-beta-D-ribosyl)imidazole-4-carboxamide + L-glutamine = D-erythro-1-(imidazol-4-yl)glycerol 3-phosphate + 5-amino-1-(5-phospho-beta-D-ribosyl)imidazole-4-carboxamide + L-glutamate + H(+). It carries out the reaction L-glutamine + H2O = L-glutamate + NH4(+). It functions in the pathway amino-acid biosynthesis; L-histidine biosynthesis; L-histidine from 5-phospho-alpha-D-ribose 1-diphosphate: step 5/9. In terms of biological role, IGPS catalyzes the conversion of PRFAR and glutamine to IGP, AICAR and glutamate. The HisH subunit catalyzes the hydrolysis of glutamine to glutamate and ammonia as part of the synthesis of IGP and AICAR. The resulting ammonia molecule is channeled to the active site of HisF. This is Imidazole glycerol phosphate synthase subunit HisH from Brucella suis biovar 1 (strain 1330).